A 327-amino-acid polypeptide reads, in one-letter code: Ornithine carbamoyltransferase (327 aa).

Carbamoyl phosphate is bound by residues 56–59 (STRT), Q83, R107, and 134–137 (HPTQ). Residues N166, D230, and 234–235 (SM) each bind L-ornithine. Carbamoyl phosphate is bound by residues 269 to 270 (CL) and R314.

It belongs to the aspartate/ornithine carbamoyltransferase superfamily. OTCase family.

Its subcellular location is the cytoplasm. The enzyme catalyses carbamoyl phosphate + L-ornithine = L-citrulline + phosphate + H(+). The protein operates within amino-acid degradation; L-arginine degradation via ADI pathway; carbamoyl phosphate from L-arginine: step 2/2. In terms of biological role, reversibly catalyzes the transfer of the carbamoyl group from carbamoyl phosphate (CP) to the N(epsilon) atom of ornithine (ORN) to produce L-citrulline. This chain is Ornithine carbamoyltransferase, found in Borreliella burgdorferi (strain ZS7) (Borrelia burgdorferi).